The chain runs to 404 residues: High affinity immunoglobulin gamma Fc receptor I (404 aa).

Positions 1 to 24 are cleaved as a signal peptide; that stretch reads MILTSFGDDMWLLTTLLLWVPVGG. The Extracellular segment spans residues 25 to 297; it reads EVVNATKAVI…QVLGPQSSAP (273 aa). 5 N-linked (GlcNAc...) asparagine glycosylation sites follow: asparagine 28, asparagine 48, asparagine 69, asparagine 168, and asparagine 249. Ig-like C2-type domains are found at residues 32-111, 117-194, and 201-286; these read AVIT…LQIH, LQAS…SITV, and PVLR…PELE. 3 disulfides stabilise this stretch: cysteine 53-cysteine 95, cysteine 134-cysteine 177, and cysteine 221-cysteine 269. The chain crosses the membrane as a helical span at residues 298-320; that stretch reads VWFHILFYLSVGIMFSLNTVLYV. Residues 321 to 342 are interaction with EPB41L2; that stretch reads KIHRLQREKKYNLEVPLVSEQG. At 321–404 the chain is on the cytoplasmic side; sequence KIHRLQREKK…DSTGAQTSQS (84 aa). The segment at 346–404 is disordered; it reads NSFQQVRSDGVYEEVTATASQTTPKEAPDGPRSSVGDCGPEQPEPLPPSDSTGAQTSQS. Serine 347 carries the phosphoserine modification. A Phosphothreonine modification is found at threonine 368. The span at 394 to 404 shows a compositional bias: polar residues; sequence SDSTGAQTSQS.

It belongs to the immunoglobulin superfamily. FCGR1 family. In terms of assembly, interacts with FCERG1; forms a functional signaling complex. Interacts with FLNA; prevents FCGR1A degradation. Interacts with EPB41L2, LAT and PPL. Interacts with HCK and LYN. In terms of processing, N-glycosylated. Post-translationally, phosphorylated on serine residues. In terms of tissue distribution, macrophage-specific.

Its subcellular location is the cell membrane. High affinity receptor for the Fc region of immunoglobulins gamma. Functions in both innate and adaptive immune responses. The chain is High affinity immunoglobulin gamma Fc receptor I (Fcgr1) from Mus musculus (Mouse).